A 329-amino-acid polypeptide reads, in one-letter code: Glycerol-3-phosphate dehydrogenase [NAD(P)+] (329 aa).

3 residues coordinate NADPH: tryptophan 11, arginine 30, and lysine 103. Lysine 103, glycine 132, and serine 134 together coordinate sn-glycerol 3-phosphate. Position 136 (alanine 136) interacts with NADPH. 5 residues coordinate sn-glycerol 3-phosphate: lysine 187, aspartate 240, serine 250, arginine 251, and asparagine 252. Lysine 187 functions as the Proton acceptor in the catalytic mechanism. Arginine 251 serves as a coordination point for NADPH. NADPH-binding residues include valine 275 and glutamate 277.

This sequence belongs to the NAD-dependent glycerol-3-phosphate dehydrogenase family.

It localises to the cytoplasm. It catalyses the reaction sn-glycerol 3-phosphate + NAD(+) = dihydroxyacetone phosphate + NADH + H(+). The catalysed reaction is sn-glycerol 3-phosphate + NADP(+) = dihydroxyacetone phosphate + NADPH + H(+). Its pathway is membrane lipid metabolism; glycerophospholipid metabolism. Catalyzes the reduction of the glycolytic intermediate dihydroxyacetone phosphate (DHAP) to sn-glycerol 3-phosphate (G3P), the key precursor for phospholipid synthesis. The sequence is that of Glycerol-3-phosphate dehydrogenase [NAD(P)+] from Nitrosomonas europaea (strain ATCC 19718 / CIP 103999 / KCTC 2705 / NBRC 14298).